The chain runs to 537 residues: Pheophorbide a oxygenase, chloroplastic (537 aa).

Residues 1-49 constitute a chloroplast transit peptide; it reads MSVVLLSSTSATITKSQSKKIPFLSPTTKFPLKVSISPSRSKLFHNPLR. The segment at 51–77 is disordered; sequence AAPPSVPTSDSTEEKRIEEEYGGDKEE. The segment covering 62 to 77 has biased composition (basic and acidic residues); that stretch reads TEEKRIEEEYGGDKEE. In terms of domain architecture, Rieske spans 88 to 200; it reads WYPVSLVEDL…TMVSQGLLFV (113 aa). [2Fe-2S] cluster is bound by residues C130, H132, C150, and H153.

Interacts with HCAR, SGR1, RCCR, PPH and the LHCII complex. Part of a SGR1-CCE-LHCII complex, which acts in chlorophyll breakdown.

The protein localises to the plastid. It is found in the chloroplast thylakoid membrane. It carries out the reaction pheophorbide a + 2 reduced [2Fe-2S]-[ferredoxin] + O2 + 2 H(+) = red chlorophyll catabolite + 2 oxidized [2Fe-2S]-[ferredoxin]. Its pathway is porphyrin-containing compound metabolism; chlorophyll degradation. Might be regulated by a phosphorylation/dephosphorylation mechanism. Functionally, catalyzes the key reaction of chlorophyll catabolism, porphyrin macrocycle cleavage of pheophorbide a (pheide a) to a primary fluorescent catabolite (pFCC). Works in a two-step reaction with red chlorophyll catabolite reductase (RCCR). Creates the intermediate RCC through the opening of the porphyrin macrocycle by the introduction of one atom of molecular oxygen at the alpha-methine bridge. Seems to be specific for pheide a. Belongs to the chlorophyll catabolic enzymes (CCEs). The protein is Pheophorbide a oxygenase, chloroplastic (PAO) of Arabidopsis thaliana (Mouse-ear cress).